We begin with the raw amino-acid sequence, 346 residues long: Phosphoribosylformylglycinamidine cyclo-ligase (346 aa).

It belongs to the AIR synthase family.

The protein localises to the cytoplasm. The catalysed reaction is 2-formamido-N(1)-(5-O-phospho-beta-D-ribosyl)acetamidine + ATP = 5-amino-1-(5-phospho-beta-D-ribosyl)imidazole + ADP + phosphate + H(+). It participates in purine metabolism; IMP biosynthesis via de novo pathway; 5-amino-1-(5-phospho-D-ribosyl)imidazole from N(2)-formyl-N(1)-(5-phospho-D-ribosyl)glycinamide: step 2/2. The chain is Phosphoribosylformylglycinamidine cyclo-ligase from Alteromonas mediterranea (strain DSM 17117 / CIP 110805 / LMG 28347 / Deep ecotype).